The sequence spans 199 residues: Isopentenyl-diphosphate Delta-isomerase (199 aa).

2 residues coordinate Mn(2+): histidine 40 and histidine 47. Residues 45-186 (PRHLAFSCHV…PALLSPWAVE (142 aa)) enclose the Nudix hydrolase domain. Cysteine 82 is an active-site residue. Residue cysteine 82 participates in Mg(2+) binding. Histidine 84 provides a ligand contact to Mn(2+). Glutamate 102 contributes to the Mg(2+) binding site. The Mn(2+) site is built by glutamate 131 and glutamate 133. Glutamate 133 is a catalytic residue.

This sequence belongs to the IPP isomerase type 1 family. Mg(2+) is required as a cofactor. Mn(2+) serves as cofactor.

Its subcellular location is the cytoplasm. The enzyme catalyses isopentenyl diphosphate = dimethylallyl diphosphate. Its pathway is isoprenoid biosynthesis; dimethylallyl diphosphate biosynthesis; dimethylallyl diphosphate from isopentenyl diphosphate: step 1/1. In terms of biological role, catalyzes the 1,3-allylic rearrangement of the homoallylic substrate isopentenyl (IPP) to its highly electrophilic allylic isomer, dimethylallyl diphosphate (DMAPP). This chain is Isopentenyl-diphosphate Delta-isomerase, found in Cutibacterium acnes (strain DSM 16379 / KPA171202) (Propionibacterium acnes).